The following is a 341-amino-acid chain: MKALSKLKAEKGIWLVDAPKPEMGHNDLLIKIKKTAICGTDMHIYNWDEWSQKTIPVPMVVGHEYVGEVVDIGQEVRGFKIGDRVSGEGHITCGHCRNCRAGRTHLCRNTSGVGVNREGSFAEYLVIPAFNAFKIPDDISDDLASIFDPFGNAVHTALSFDLVGEDVLITGAGPIGIMAAAVCRHVGARHVVITDVNEYRLELARKMGATRAVNVSKENLKDVMKELGMTEGFDVGLEMSGVPSAFHAMLDTMNHGGKVAMLGIPGGEMAIDWSKVIFKGLVIKGIYGREMFETWYKMASLIQSGLDISPIITHHYKIDDFQKGFDAMGSGQSGKVILSWD.

Position 38 (cysteine 38) interacts with Zn(2+). Residues threonine 40 and histidine 43 each act as charge relay system in the active site. Zn(2+)-binding residues include histidine 63, glutamate 64, cysteine 93, cysteine 96, cysteine 99, and cysteine 107. NAD(+) is bound by residues isoleucine 175, aspartate 195, arginine 200, 262–264, and 286–287; these read LGI and IY.

Belongs to the zinc-containing alcohol dehydrogenase family. As to quaternary structure, homotetramer. Requires Zn(2+) as cofactor.

The protein localises to the cytoplasm. The catalysed reaction is L-threonine + NAD(+) = (2S)-2-amino-3-oxobutanoate + NADH + H(+). It participates in amino-acid degradation; L-threonine degradation via oxydo-reductase pathway; glycine from L-threonine: step 1/2. In terms of biological role, catalyzes the NAD(+)-dependent oxidation of L-threonine to 2-amino-3-ketobutyrate. This chain is L-threonine 3-dehydrogenase, found in Shewanella putrefaciens (strain CN-32 / ATCC BAA-453).